We begin with the raw amino-acid sequence, 406 residues long: Gustatory receptor for sugar taste 64b (406 aa).

Over methionine 1–leucine 47 the chain is Cytoplasmic. Residues tyrosine 48 to isoleucine 68 form a helical membrane-spanning segment. Topologically, residues lysine 69 to threonine 79 are extracellular. A helical membrane pass occupies residues leucine 80–tryptophan 100. Over proline 101–arginine 130 the chain is Cytoplasmic. A helical transmembrane segment spans residues isoleucine 131 to glycine 151. Topologically, residues asparagine 152–tyrosine 183 are extracellular. Asparagine 167 carries N-linked (GlcNAc...) asparagine glycosylation. A helical transmembrane segment spans residues methionine 184–alanine 204. The Cytoplasmic portion of the chain corresponds to tyrosine 205–alanine 265. The chain crosses the membrane as a helical span at residues isoleucine 266–phenylalanine 286. The Extracellular portion of the chain corresponds to asparagine 287–lysine 290. Residues asparagine 291–valine 311 traverse the membrane as a helical segment. Over arginine 312 to arginine 370 the chain is Cytoplasmic. The chain crosses the membrane as a helical span at residues serine 371–isoleucine 391. Residues asparagine 392–tyrosine 406 lie on the Extracellular side of the membrane.

It belongs to the insect chemoreceptor superfamily. Gustatory receptor (GR) family. Gr5a subfamily. In terms of tissue distribution, expressed in Gr5a-expressing sugar-sensing cells.

The protein localises to the cell membrane. Its function is as follows. One of the few identified sugar gustatory receptors identified so far and which promotes the starvation-induced increase of feeding motivation. This is Gustatory receptor for sugar taste 64b (Gr64b) from Drosophila melanogaster (Fruit fly).